The primary structure comprises 53 residues: Large ribosomal subunit protein eL40 (53 aa).

It belongs to the eukaryotic ribosomal protein eL40 family.

The protein is Large ribosomal subunit protein eL40 of Staphylothermus marinus (strain ATCC 43588 / DSM 3639 / JCM 9404 / F1).